Reading from the N-terminus, the 837-residue chain is Protein translocase subunit SecA (837 aa).

ATP is bound by residues Gln-83, 101-105 (GEGKT), and Asp-494.

The protein belongs to the SecA family. In terms of assembly, monomer and homodimer. Part of the essential Sec protein translocation apparatus which comprises SecA, SecYEG and auxiliary proteins SecDF. Other proteins may also be involved.

It is found in the cell membrane. The protein resides in the cytoplasm. The enzyme catalyses ATP + H2O + cellular proteinSide 1 = ADP + phosphate + cellular proteinSide 2.. In terms of biological role, part of the Sec protein translocase complex. Interacts with the SecYEG preprotein conducting channel. Has a central role in coupling the hydrolysis of ATP to the transfer of proteins into and across the cell membrane, serving as an ATP-driven molecular motor driving the stepwise translocation of polypeptide chains across the membrane. This chain is Protein translocase subunit SecA, found in Ureaplasma parvum serovar 3 (strain ATCC 27815 / 27 / NCTC 11736).